The sequence spans 648 residues: Spastin (648 aa).

Over 1-40 (MASTVALLRDSSDDRENFDDGETDCVQVGRKRKLTVFFYP) the chain is Cytoplasmic. The segment at residues 41–61 (LLLVFWLLRWVFYQFFLVLCF) is an intramembrane region (helical). Residues 62–648 (VCRGFVPRRH…WNREFGDITV (587 aa)) lie on the Cytoplasmic side of the membrane. Residues 99–174 (HKKAFDFISK…EMARDRLDFL (76 aa)) form the MIT domain. The segment at 188 to 346 (PWHGGVAPAQ…SQRSLLSSRV (159 aa)) is disordered. The segment covering 247–266 (TGVTLRRQQQQQLGGVSTVS) has biased composition (low complexity). 414-421 (GPPGNGKT) serves as a coordination point for ATP.

The protein belongs to the AAA ATPase family. Spastin subfamily. As to quaternary structure, homohexamer. The homohexamer is stabilized by ATP-binding. The homohexamer may adopt a ring conformation through which microtubules pass prior to being severed. Interacts with microtubules.

The protein resides in the membrane. It is found in the cytoplasm. The protein localises to the cytoskeleton. Its subcellular location is the microtubule organizing center. It localises to the centrosome. The enzyme catalyses n ATP + n H2O + a microtubule = n ADP + n phosphate + (n+1) alpha/beta tubulin heterodimers.. Its function is as follows. ATP-dependent microtubule severing protein. Microtubule severing may promote reorganization of cellular microtubule arrays and the release of microtubules from the microtubule organizing center following nucleation. The protein is Spastin (spas) of Ixodes scapularis (Black-legged tick).